The following is a 65-amino-acid chain: Large ribosomal subunit protein bL35 (65 aa).

Belongs to the bacterial ribosomal protein bL35 family.

The sequence is that of Large ribosomal subunit protein bL35 from Polynucleobacter asymbioticus (strain DSM 18221 / CIP 109841 / QLW-P1DMWA-1) (Polynucleobacter necessarius subsp. asymbioticus).